Here is a 229-residue protein sequence, read N- to C-terminus: Flagellar L-ring protein (229 aa).

A signal peptide spans 1 to 23 (MNPLTRVALAVAAFAALVLALSA). Residue C24 is the site of N-palmitoyl cysteine attachment. C24 carries the S-diacylglycerol cysteine lipid modification.

It belongs to the FlgH family. In terms of assembly, the basal body constitutes a major portion of the flagellar organelle and consists of four rings (L,P,S, and M) mounted on a central rod.

It is found in the cell outer membrane. It localises to the bacterial flagellum basal body. Its function is as follows. Assembles around the rod to form the L-ring and probably protects the motor/basal body from shearing forces during rotation. The chain is Flagellar L-ring protein from Anaeromyxobacter dehalogenans (strain 2CP-1 / ATCC BAA-258).